The primary structure comprises 431 residues: Histidinol dehydrogenase (431 aa).

Residues Y127, Q189, and N212 each coordinate NAD(+). S237, Q259, and H262 together coordinate substrate. Residues Q259 and H262 each contribute to the Zn(2+) site. Residues E326 and H327 each act as proton acceptor in the active site. Substrate is bound by residues H327, D360, E414, and H419. D360 provides a ligand contact to Zn(2+). H419 serves as a coordination point for Zn(2+).

It belongs to the histidinol dehydrogenase family. Zn(2+) serves as cofactor.

The enzyme catalyses L-histidinol + 2 NAD(+) + H2O = L-histidine + 2 NADH + 3 H(+). It functions in the pathway amino-acid biosynthesis; L-histidine biosynthesis; L-histidine from 5-phospho-alpha-D-ribose 1-diphosphate: step 9/9. Functionally, catalyzes the sequential NAD-dependent oxidations of L-histidinol to L-histidinaldehyde and then to L-histidine. The polypeptide is Histidinol dehydrogenase (Xanthomonas axonopodis pv. citri (strain 306)).